Consider the following 175-residue polypeptide: uncharacterized protein (175 aa).

5 helical membrane passes run 25 to 45, 46 to 66, 97 to 117, 124 to 144, and 155 to 175; these read MIAI…TTIS, ATGP…FFLL, FAGW…LTAV, WLPG…LTLL, and TEFW…VTGI.

This sequence belongs to the amino acid-polyamine-organocation (APC) superfamily.

It localises to the cell membrane. This is an uncharacterized protein from Lactobacillus delbrueckii subsp. lactis.